Consider the following 749-residue polypeptide: Amyloid-beta A4 precursor protein-binding family A member 2 (749 aa).

2 disordered regions span residues M1 to E94 and D130 to P343. At S11 the chain carries Phosphoserine. The segment covering G70–T80 has biased composition (polar residues). Acidic residues-rich tracts occupy residues S81 to E94 and T131 to T142. Residues H185–A270 are STXBP1-binding. S208 bears the Phosphoserine mark. Positions D218–D227 are enriched in acidic residues. A compositionally biased stretch (polar residues) spans L237–E247. Positions R305–H315 are enriched in basic and acidic residues. The region spanning L366–D555 is the PID domain. PDZ domains lie at E568–S653 and T659–A735.

Part of a multimeric complex containing STXBP1 and syntaxin-1. Binds to the cytoplasmic domain of amyloid-beta protein, and to the nuclear factor NF-kappa-B/p65 via its PDZ domain. Interacts with the N-terminal domain of NECAB3.

Functionally, putative function in synaptic vesicle exocytosis by binding to STXBP1, an essential component of the synaptic vesicle exocytotic machinery. May modulate processing of the amyloid-beta precursor protein (APP) and hence formation of APP-beta. The polypeptide is Amyloid-beta A4 precursor protein-binding family A member 2 (APBA2) (Pongo abelii (Sumatran orangutan)).